The following is a 457-amino-acid chain: Siroheme synthase (457 aa).

Residues 1 to 204 (MDHLPIFCQL…NDQKAITETT (204 aa)) are precorrin-2 dehydrogenase /sirohydrochlorin ferrochelatase. NAD(+)-binding positions include 22–23 (DV) and 43–44 (LA). Position 128 is a phosphoserine (Ser-128). The tract at residues 216–457 (GEVVLVGAGP…RDKLNWFSNH (242 aa)) is uroporphyrinogen-III C-methyltransferase. S-adenosyl-L-methionine is bound at residue Pro-225. Asp-248 (proton acceptor) is an active-site residue. Catalysis depends on Lys-270, which acts as the Proton donor. S-adenosyl-L-methionine contacts are provided by residues 301 to 303 (GGD), Ile-306, 331 to 332 (TA), Met-382, and Gly-411.

In the N-terminal section; belongs to the precorrin-2 dehydrogenase / sirohydrochlorin ferrochelatase family. The protein in the C-terminal section; belongs to the precorrin methyltransferase family.

It carries out the reaction uroporphyrinogen III + 2 S-adenosyl-L-methionine = precorrin-2 + 2 S-adenosyl-L-homocysteine + H(+). The catalysed reaction is precorrin-2 + NAD(+) = sirohydrochlorin + NADH + 2 H(+). It catalyses the reaction siroheme + 2 H(+) = sirohydrochlorin + Fe(2+). It participates in cofactor biosynthesis; adenosylcobalamin biosynthesis; precorrin-2 from uroporphyrinogen III: step 1/1. It functions in the pathway cofactor biosynthesis; adenosylcobalamin biosynthesis; sirohydrochlorin from precorrin-2: step 1/1. The protein operates within porphyrin-containing compound metabolism; siroheme biosynthesis; precorrin-2 from uroporphyrinogen III: step 1/1. Its pathway is porphyrin-containing compound metabolism; siroheme biosynthesis; siroheme from sirohydrochlorin: step 1/1. It participates in porphyrin-containing compound metabolism; siroheme biosynthesis; sirohydrochlorin from precorrin-2: step 1/1. Functionally, multifunctional enzyme that catalyzes the SAM-dependent methylations of uroporphyrinogen III at position C-2 and C-7 to form precorrin-2 via precorrin-1. Then it catalyzes the NAD-dependent ring dehydrogenation of precorrin-2 to yield sirohydrochlorin. Finally, it catalyzes the ferrochelation of sirohydrochlorin to yield siroheme. This Escherichia coli (strain 55989 / EAEC) protein is Siroheme synthase.